Consider the following 577-residue polypeptide: Arginine--tRNA ligase (577 aa).

The 'HIGH' region motif lies at 122 to 132 (PNVAKEMHVGH).

Belongs to the class-I aminoacyl-tRNA synthetase family. As to quaternary structure, monomer.

Its subcellular location is the cytoplasm. The catalysed reaction is tRNA(Arg) + L-arginine + ATP = L-arginyl-tRNA(Arg) + AMP + diphosphate. This Escherichia coli O81 (strain ED1a) protein is Arginine--tRNA ligase.